The following is a 201-amino-acid chain: Large ribosomal subunit protein bL25 (201 aa).

It belongs to the bacterial ribosomal protein bL25 family. CTC subfamily. As to quaternary structure, part of the 50S ribosomal subunit; part of the 5S rRNA/L5/L18/L25 subcomplex. Contacts the 5S rRNA. Binds to the 5S rRNA independently of L5 and L18.

Its function is as follows. This is one of the proteins that binds to the 5S RNA in the ribosome where it forms part of the central protuberance. The chain is Large ribosomal subunit protein bL25 from Akkermansia muciniphila (strain ATCC BAA-835 / DSM 22959 / JCM 33894 / BCRC 81048 / CCUG 64013 / CIP 107961 / Muc).